Here is a 534-residue protein sequence, read N- to C-terminus: Cytochrome P450 monooxygenase btcB (534 aa).

N-linked (GlcNAc...) asparagine glycosylation occurs at asparagine 20. A helical transmembrane segment spans residues 41–61; sequence ALAFLCGALLFGFVYSVFYNL. Residues asparagine 335, asparagine 413, and asparagine 431 are each glycosylated (N-linked (GlcNAc...) asparagine). Residue cysteine 484 coordinates heme.

The protein belongs to the cytochrome P450 family. The cofactor is heme.

The protein resides in the membrane. It functions in the pathway secondary metabolite biosynthesis; terpenoid biosynthesis. Functionally, cytochrome P4590 monooxygenase part of the gene cluster that mediates the biosynthesis of betaestacins. The bifunctional terpene synthase btcA converts isopentenyl diphosphate (IPP) and dimethylallyl diphosphate (DMAPP) into the sesterterpene betaestacin I. The C-terminal prenyltransferase (PT) domain of btcA catalyzes formation of GFPP, whereas the N-terminal terpene cyclase (TC) domain catalyzes the cyclization of GFPP into betaestacin I. The cytochrome P450 monooxygenase btcB oxidizes the C25 methyl group of betaestacin I to yield the carboxylic acid betaestacin IV via the alcohol betaestacin III. The cytochrome P450 monooxygenase btcC further catalyzes the multistep oxidation of betaestacin IV to produce several compounds, including betaestacins Va, Vb, Vc and VI. In Colletotrichum orbiculare (strain 104-T / ATCC 96160 / CBS 514.97 / LARS 414 / MAFF 240422) (Cucumber anthracnose fungus), this protein is Cytochrome P450 monooxygenase btcB.